A 419-amino-acid chain; its full sequence is MRKTNMWFLERLRGSGENGASRGEAGDKSSKGPLYSNVLTPDKIPDFFIPPKLPSGPTEAEGQADLGPSTSEQNLASPGPRRAPRSPRLPAKLASESRSLLKAATRHVIQIESAEDWTAEEATNADPQAQGAMSLPSVPKAQTSYGFATLAESPHTRRKESLFHSEHGALAQVGSPGAGRRRAGAKGNGGDGGSREVGGALMSPSRYFSGGESDTGSSAESSPFGSPLLSRSVSLLKGFAQDSQAKVSQLKQSVGRHGSLSADDSTPDTSPGVRRRLSRRATPEPGPESGQAPRGEHTVKMGTRGSVRLLAEYEAAQARLRVRLLAAEGLYDRPCDARSINCCVGLCLVPGKLQKQRSTIIKNSRHPIFNEDFFFDGLGPASVRKLALRIKVVNKGSSLKRDTLLGEEELPLTSLLPFL.

Disordered regions lie at residues 1-96 (MRKT…LASE), 115-136 (EDWTAEEATNADPQAQGAMSLP), 151-225 (AESP…SPFG), and 247-300 (VSQL…HTVK). The segment covering 75–94 (LASPGPRRAPRSPRLPAKLA) has biased composition (low complexity). Over residues 186-196 (KGNGGDGGSRE) the composition is skewed to gly residues. Over residues 212 to 225 (ESDTGSSAESSPFG) the composition is skewed to polar residues. Residues S259, S261, and S270 each carry the phosphoserine modification. Positions 303 to 419 (TRGSVRLLAE…LPLTSLLPFL (117 aa)) constitute a C2 domain.

Belongs to the C2CD4 family.

The chain is C2 calcium-dependent domain-containing protein 4C (C2cd4c) from Mus musculus (Mouse).